Consider the following 386-residue polypeptide: Phosphoglycerate kinase (386 aa).

Substrate is bound by residues D21 to N23, R36, H59 to R62, R112, and R145. Residues K196, E313, and G339–T342 each bind ATP.

The protein belongs to the phosphoglycerate kinase family. Monomer.

It is found in the cytoplasm. It catalyses the reaction (2R)-3-phosphoglycerate + ATP = (2R)-3-phospho-glyceroyl phosphate + ADP. Its pathway is carbohydrate degradation; glycolysis; pyruvate from D-glyceraldehyde 3-phosphate: step 2/5. This chain is Phosphoglycerate kinase (pgk), found in Haemophilus influenzae (strain ATCC 51907 / DSM 11121 / KW20 / Rd).